The chain runs to 363 residues: Flagellar P-ring protein (363 aa).

An N-terminal signal peptide occupies residues 1-18 (MWKKVLIAIVFITSFSFA).

The protein belongs to the FlgI family. The basal body constitutes a major portion of the flagellar organelle and consists of four rings (L,P,S, and M) mounted on a central rod.

Its subcellular location is the periplasm. The protein localises to the bacterial flagellum basal body. Assembles around the rod to form the L-ring and probably protects the motor/basal body from shearing forces during rotation. The sequence is that of Flagellar P-ring protein from Sulfurihydrogenibium sp. (strain YO3AOP1).